The following is a 508-amino-acid chain: UBX domain-containing protein 4 (508 aa).

The interaction with UBQLN1 stretch occupies residues 1–200 (MLWFQGAIPA…PTEDLTVRVE (200 aa)). Residues 1–413 (MLWFQGAIPA…VHSSSGDFWT (413 aa)) are Cytoplasmic-facing. A disordered region spans residues 117 to 199 (GEASLANGSQ…RPTEDLTVRV (83 aa)). Over residues 122-190 (ANGSQSEGSV…QEPSGCSNQR (69 aa)) the composition is skewed to polar residues. The 79-residue stretch at 315–393 (ERSTVARIQF…ELAPSASVVL (79 aa)) folds into the UBX domain. An intramembrane segment occupies 414 to 434 (LLGTVLYPFLAIWRLISNFLF). The Cytoplasmic portion of the chain corresponds to 435–508 (SNPPPAQTSV…TWNGNSTQQM (74 aa)). The segment covering 450–459 (ETSNLASSSN) has biased composition (polar residues). The interval 450–508 (ETSNLASSSNSEKREPVRKRVLEKRGEDFKKEGKIYRLRTQDDGEDENNTWNGNSTQQM) is disordered. Residues 460-491 (SEKREPVRKRVLEKRGEDFKKEGKIYRLRTQD) are compositionally biased toward basic and acidic residues. T489 is modified (phosphothreonine). Residues 498–508 (NTWNGNSTQQM) show a composition bias toward polar residues.

Directly interacts with VCP. Interacts with UBQLN1. Forms a complex with VCP and UBQLN1.

Its subcellular location is the endoplasmic reticulum membrane. The protein resides in the nucleus envelope. Involved in endoplasmic reticulum-associated protein degradation (ERAD). Acts as a platform to recruit both UBQLN1 and VCP to the ER during ERAD. The protein is UBX domain-containing protein 4 (UBXN4) of Bos taurus (Bovine).